Reading from the N-terminus, the 1161-residue chain is DNA-directed RNA polymerase subunit beta' (1161 aa).

Zn(2+) contacts are provided by cysteine 60, cysteine 62, cysteine 75, and cysteine 78. Positions 449, 451, and 453 each coordinate Mg(2+). Cysteine 790, cysteine 864, cysteine 871, and cysteine 874 together coordinate Zn(2+).

It belongs to the RNA polymerase beta' chain family. In terms of assembly, the RNAP catalytic core consists of 2 alpha, 1 beta, 1 beta' and 1 omega subunit. When a sigma factor is associated with the core the holoenzyme is formed, which can initiate transcription. It depends on Mg(2+) as a cofactor. The cofactor is Zn(2+).

It carries out the reaction RNA(n) + a ribonucleoside 5'-triphosphate = RNA(n+1) + diphosphate. DNA-dependent RNA polymerase catalyzes the transcription of DNA into RNA using the four ribonucleoside triphosphates as substrates. The protein is DNA-directed RNA polymerase subunit beta' of Clostridioides difficile (strain 630) (Peptoclostridium difficile).